We begin with the raw amino-acid sequence, 638 residues long: Threonine--tRNA ligase (638 aa).

Residues 1–61 (MPVVTLPDGS…EADAEVALVT (61 aa)) enclose the TGS domain. Residues 242–533 (DHRKLGKALD…LTEHYAGQYP (292 aa)) form a catalytic region. 3 residues coordinate Zn(2+): Cys333, His384, and His510.

It belongs to the class-II aminoacyl-tRNA synthetase family. As to quaternary structure, homodimer. Zn(2+) serves as cofactor.

It localises to the cytoplasm. It catalyses the reaction tRNA(Thr) + L-threonine + ATP = L-threonyl-tRNA(Thr) + AMP + diphosphate + H(+). Its function is as follows. Catalyzes the attachment of threonine to tRNA(Thr) in a two-step reaction: L-threonine is first activated by ATP to form Thr-AMP and then transferred to the acceptor end of tRNA(Thr). Also edits incorrectly charged L-seryl-tRNA(Thr). The chain is Threonine--tRNA ligase from Methylococcus capsulatus (strain ATCC 33009 / NCIMB 11132 / Bath).